The following is a 396-amino-acid chain: Pectinesterase (396 aa).

A signal peptide spans 1–26; the sequence is MQSTTLYLKTAAFLGGCSLFAATALA. Position 174 (Thr174) interacts with substrate. Asp232 serves as the catalytic Proton donor. Asp259 functions as the Nucleophile in the catalytic mechanism. Substrate contacts are provided by Arg324 and Trp326.

Belongs to the pectinesterase family.

The protein localises to the secreted. It catalyses the reaction [(1-&gt;4)-alpha-D-galacturonosyl methyl ester](n) + n H2O = [(1-&gt;4)-alpha-D-galacturonosyl](n) + n methanol + n H(+). Its pathway is glycan metabolism; pectin degradation; 2-dehydro-3-deoxy-D-gluconate from pectin: step 1/5. In terms of biological role, involved in maceration and soft-rotting of plant tissue. In Ralstonia solanacearum (Pseudomonas solanacearum), this protein is Pectinesterase (pme).